A 278-amino-acid chain; its full sequence is MFQLLRCVPRVLGTAVAGLRAAAPSLPRLQPASRPCARPFGLLSVRARSVQLPGLLKPRGPCACGCGCSGLHTEGDKAFVDFLSDEIKEEKKIQKYKSLPKMSGGWELEVNGTEAKLVRKVAGEKITVTFNINNSIPPAFGGEEEEPSQGQKAEEQEPELTSTPNFVVEVTKDGSSKALVLDCHYPEDEIGQEDDQSDIFSIKEVSFQATGESDWKDTNYTLNTDSLDWGLYDHLMDFLADRGVDNTFADELVELSTALEHQEYISFLEDLKGFVKSK.

The transit peptide at 1–70 directs the protein to the mitochondrion; sequence MFQLLRCVPR…PCACGCGCSG (70 aa). A C1q binding region spans residues 73 to 90; the sequence is TEGDKAFVDFLSDEIKEE. Ser84 carries the phosphoserine modification. Residues Lys88 and Lys91 each carry the N6-acetyllysine modification. Residues 136-164 form a disordered region; sequence IPPAFGGEEEEPSQGQKAEEQEPELTSTP. An interaction with MAVS region spans residues 166-209; the sequence is FVVEVTKDGSSKALVLDCHYPEDEIGQEDDQSDIFSIKEVSFQA. At Tyr185 the chain carries Phosphotyrosine. Phosphoserine is present on residues Ser197 and Ser201. Phosphothreonine is present on Thr210.

This sequence belongs to the MAM33 family. In terms of assembly, homotrimer; three monomers form a donut-shaped structure with an unusually asymmetric charge distribution on the surface. Interacts with CDK13, HRK, VTN, NFYB, ADRA1B, FOXC1, DDX21, DDX50, NCL, SRSF1 and SRSF9. Interacts with CD93; the association may represent a cell surface C1q receptor. Interacts with KRT1; the association represents a cell surface kininogen receptor. Interacts with CD209; the interaction is indicative for a C1q:C1QBP:CD209 signaling complex. Interacts with FBL and RRP1; the respective interactions with C1QBP are competitive. Probably associates with the mitoribosome. Interacts with MAVS; the interaction occurs upon viral transfection. Interacts with PPIF. Interacts with U2AF1L4. Interacts with PLEKHN1. Interacts with VGF-derived peptide TLQP-21. Interacts with MRE11 and RAD50; forming the MRC (MRE11-RAD50-C1QBP) complex that inhibits the activity of MRE11.

It localises to the mitochondrion matrix. The protein localises to the nucleus. The protein resides in the cell membrane. It is found in the secreted. Its subcellular location is the cytoplasm. It localises to the nucleolus. Functionally, multifunctional and multicompartmental protein involved in inflammation and infection processes, ribosome biogenesis, protein synthesis in mitochondria, regulation of apoptosis, transcriptional regulation and pre-mRNA splicing. At the cell surface is thought to act as an endothelial receptor for plasma proteins of the complement and kallikrein-kinin cascades. Putative receptor for C1q; specifically binds to the globular 'heads' of C1q thus inhibiting C1; may perform the receptor function through a complex with C1qR/CD93. In complex with cytokeratin-1/KRT1 is a high affinity receptor for kininogen-1/HMWK. Can also bind other plasma proteins, such as coagulation factor XII leading to its autoactivation. May function to bind initially fluid kininogen-1 to the cell membrane. The secreted form may enhance both extrinsic and intrinsic coagulation pathways. It is postulated that the cell surface form requires docking with transmembrane proteins for downstream signaling which might be specific for a cell-type or response. By acting as C1q receptor is involved in chemotaxis of immature dendritic cells and neutrophils and is proposed to signal through CD209/DC-SIGN on immature dendritic cells, through integrin alpha-4/beta-1 during trophoblast invasion of the decidua, and through integrin beta-1 during endothelial cell adhesion and spreading. Signaling involved in inhibition of innate immune response is implicating the PI3K-AKT/PKB pathway. Required for protein synthesis in mitochondria. In mitochondrial translation may be involved in formation of functional 55S mitoribosomes; the function seems to involve its RNA-binding activity. Acts as a RNA modification reader, which specifically recognizes and binds mitochondrial RNAs modified by C5-methylcytosine (m5C) in response to stress, and promotes recruitment of the mitochondrial degradosome complex, leading to their degradation. May be involved in the nucleolar ribosome maturation process; the function may involve the exchange of FBL for RRP1 in the association with pre-ribosome particles. Involved in regulation of RNA splicing by inhibiting the RNA-binding capacity of SRSF1 and its phosphorylation. Is required for the nuclear translocation of splicing factor U2AF1L4. Involved in regulation of CDKN2A- and HRK-mediated apoptosis. Stabilizes mitochondrial CDKN2A isoform smARF. May be involved in regulation of FOXC1 transcriptional activity and NFY/CCAAT-binding factor complex-mediated transcription. May play a role in antibacterial defense as it can bind to cell surface hyaluronan and inhibit Streptococcus pneumoniae hyaluronate lyase. May be involved in modulation of the immune response; ligation by HCV core protein is resulting in suppression of interleukin-12 production in monocyte-derived dendritic cells. Involved in regulation of antiviral response by inhibiting RIGI- and IFIH1-mediated signaling pathways probably involving its association with MAVS after viral infection. Acts as a regulator of DNA repair via homologous recombination by inhibiting the activity of MRE11: interacts with unphosphorylated MRE11 and RAD50 in absence of DNA damage, preventing formation and activity of the MRN complex. Following DNA damage, dissociates from phosphorylated MRE11, allowing formation of the MRN complex. This chain is Complement component 1 Q subcomponent-binding protein, mitochondrial (C1QBP), found in Bos taurus (Bovine).